The following is a 146-amino-acid chain: UPF0260 protein Spea_2441 (146 aa).

It belongs to the UPF0260 family.

In Shewanella pealeana (strain ATCC 700345 / ANG-SQ1), this protein is UPF0260 protein Spea_2441.